A 267-amino-acid polypeptide reads, in one-letter code: GTP cyclohydrolase FolE2 (267 aa).

The protein belongs to the GTP cyclohydrolase IV family.

It catalyses the reaction GTP + H2O = 7,8-dihydroneopterin 3'-triphosphate + formate + H(+). It functions in the pathway cofactor biosynthesis; 7,8-dihydroneopterin triphosphate biosynthesis; 7,8-dihydroneopterin triphosphate from GTP: step 1/1. Its function is as follows. Converts GTP to 7,8-dihydroneopterin triphosphate. This Cupriavidus necator (strain ATCC 17699 / DSM 428 / KCTC 22496 / NCIMB 10442 / H16 / Stanier 337) (Ralstonia eutropha) protein is GTP cyclohydrolase FolE2.